The chain runs to 971 residues: Exportin-2 (971 aa).

Residue M1 is modified to N-acetylmethionine. In terms of domain architecture, Importin N-terminal spans 29–102 (AEKFLESVEG…KANIVHLMLS (74 aa)). A Phosphoserine modification is found at S112. K574 and K824 each carry N6-acetyllysine. S931 is subject to Phosphoserine.

This sequence belongs to the XPO2/CSE1 family. Found in a complex with CSE1L/XPO2, Ran and KPNA2. Binds with high affinity to importin-alpha only in the presence of RanGTP. The complex is dissociated by the combined action of RanBP1 and RanGAP1. Interacts with CFTR.

It is found in the cytoplasm. The protein resides in the nucleus. Its function is as follows. Export receptor for importin-alpha. Mediates importin-alpha re-export from the nucleus to the cytoplasm after import substrates (cargos) have been released into the nucleoplasm. In the nucleus binds cooperatively to importin-alpha and to the GTPase Ran in its active GTP-bound form. Docking of this trimeric complex to the nuclear pore complex (NPC) is mediated through binding to nucleoporins. Upon transit of a nuclear export complex into the cytoplasm, disassembling of the complex and hydrolysis of Ran-GTP to Ran-GDP (induced by RANBP1 and RANGAP1, respectively) cause release of the importin-alpha from the export receptor. CSE1L/XPO2 then return to the nuclear compartment and mediate another round of transport. The directionality of nuclear export is thought to be conferred by an asymmetric distribution of the GTP- and GDP-bound forms of Ran between the cytoplasm and nucleus. In Bos taurus (Bovine), this protein is Exportin-2 (CSE1L).